A 677-amino-acid chain; its full sequence is Zinc finger and BTB domain-containing protein 5 (677 aa).

One can recognise a BTB domain in the interval 24–93 (CDCVIVVGNR…MYTSTLMLGE (70 aa)). Over residues 158-181 (LNSSQNGEEQPAPMSSSMRSNLDQ) the composition is skewed to polar residues. Disordered stretches follow at residues 158–252 (LNSS…MTDN) and 287–312 (SMASRATQVETSFDQEAAPEKSSFQC). The residue at position 234 (Ser234) is a Phosphoserine. A Glycyl lysine isopeptide (Lys-Gly) (interchain with G-Cter in SUMO2) cross-link involves residue Lys239. The segment covering 287-300 (SMASRATQVETSFD) has biased composition (polar residues). Residues Lys322 and Lys330 each participate in a glycyl lysine isopeptide (Lys-Gly) (interchain with G-Cter in SUMO2) cross-link. A disordered region spans residues 331 to 387 (SEPLSSPEPQDEVSDVTSQAEGSESVEVEGVVVSAEKIDLSPESSDRSFSDPQSSTD). The span at 350 to 365 (AEGSESVEVEGVVVSA) shows a compositional bias: low complexity. Basic and acidic residues predominate over residues 366-379 (EKIDLSPESSDRSF). At Ser371 the chain carries Phosphoserine. Residues Lys404 and Lys415 each participate in a glycyl lysine isopeptide (Lys-Gly) (interchain with G-Cter in SUMO2) cross-link. A disordered region spans residues 447–474 (LLSPEAGPAGGPSSAPGSHVENPFSEPA). Over residues 449–464 (SPEAGPAGGPSSAPGS) the composition is skewed to low complexity. Lys541 is covalently cross-linked (Glycyl lysine isopeptide (Lys-Gly) (interchain with G-Cter in SUMO2)). Residues 552–576 (QIPENSTSSQLMMNGATSSFENGHP) show a composition bias toward polar residues. The disordered stretch occupies residues 552-585 (QIPENSTSSQLMMNGATSSFENGHPSQPGPPQLT). Residues Lys594 and Lys597 each participate in a glycyl lysine isopeptide (Lys-Gly) (interchain with G-Cter in SUMO2) cross-link. Residues 613-635 (YACKICCKTFLTLTDCKKHIRVH) form a C2H2-type 1 zinc finger. Residues 641–664 (YACLKCGKRFSQSSHLYKHSKTTC) form a C2H2-type 2; atypical zinc finger. Glycyl lysine isopeptide (Lys-Gly) (interchain with G-Cter in SUMO2) cross-links involve residues Lys645 and Lys658.

The protein localises to the nucleus. Functionally, may be involved in transcriptional regulation. This chain is Zinc finger and BTB domain-containing protein 5 (ZBTB5), found in Homo sapiens (Human).